Reading from the N-terminus, the 679-residue chain is Methionine--tRNA ligase (679 aa).

The short motif at 15-25 is the 'HIGH' region element; that stretch reads PYANGPIHLGH. The Zn(2+) site is built by Cys-146, Cys-149, Cys-159, and Cys-162. A 'KMSKS' region motif is present at residues 332-336; it reads KMSKS. Residue Lys-335 coordinates ATP. One can recognise a tRNA-binding domain in the interval 578 to 679; that stretch reads DFAKIDLRIA…EGAQPGMKVK (102 aa).

This sequence belongs to the class-I aminoacyl-tRNA synthetase family. MetG type 1 subfamily. Homodimer. Zn(2+) is required as a cofactor.

It is found in the cytoplasm. The enzyme catalyses tRNA(Met) + L-methionine + ATP = L-methionyl-tRNA(Met) + AMP + diphosphate. Its function is as follows. Is required not only for elongation of protein synthesis but also for the initiation of all mRNA translation through initiator tRNA(fMet) aminoacylation. The polypeptide is Methionine--tRNA ligase (Shewanella pealeana (strain ATCC 700345 / ANG-SQ1)).